The chain runs to 498 residues: Glycerol kinase (498 aa).

ADP is bound at residue T11. Residues T11, T12, and S13 each contribute to the ATP site. T11 contributes to the sn-glycerol 3-phosphate binding site. R15 contacts ADP. R81, E82, Y133, and D242 together coordinate sn-glycerol 3-phosphate. The glycerol site is built by R81, E82, Y133, D242, and Q243. ADP-binding residues include T264 and G307. ATP is bound by residues T264, G307, Q311, and G411. ADP is bound at residue G411.

Belongs to the FGGY kinase family.

It catalyses the reaction glycerol + ATP = sn-glycerol 3-phosphate + ADP + H(+). It functions in the pathway polyol metabolism; glycerol degradation via glycerol kinase pathway; sn-glycerol 3-phosphate from glycerol: step 1/1. Inhibited by fructose 1,6-bisphosphate (FBP). Its function is as follows. Key enzyme in the regulation of glycerol uptake and metabolism. Catalyzes the phosphorylation of glycerol to yield sn-glycerol 3-phosphate. The polypeptide is Glycerol kinase (Afipia carboxidovorans (strain ATCC 49405 / DSM 1227 / KCTC 32145 / OM5) (Oligotropha carboxidovorans)).